Consider the following 721-residue polypeptide: MRFATAQLAALAYYILSTEATFPLLGDIFNCIPHNTPPVCTDLGLYHDSSISLGGSKNKREAEIANKDGTIEKRTFGSAGVNAGFNAAFVVSNAKKLSDGSYGIDCNFKSDSSVQLNSAFGKKVKQLSITGTGYSDISLLGNVANPFEWSASLKVKAEIVKGKCCLPSGFRIVTDFESNCPEFDAIKQFFGSSQIIYKVNAVSNAIGTFDASALFNAQVKAFPAKRELDEFEELSNDGVTHSKRTLGLLLGLLKKVTGGCDTLQQFCWDCQCDTPSPSTTTVSTSSAPSTSPESSAPSTTTVTTSSSPVTSPESSVPETTTVTTSSVPETTPESSAPETTTVTTSSVPSTTPESSAPETTPESSAPESSVPESSAPETTPESSAPESSVPESSAPETETETTPTAHLTTTTAQTTTVITVTSCSNNACSKTEVTTGVVVVTSEDTIYTTFCPLTETTPVPSSVDSTSVTSAPETTPESTAPESSAPESSAPESSAPVTETPTGPVSTVTEQSKTIVTITSCSNNACSESKVTTGVVVVTSEDTVYTTFCPLTETTPATESASESSAPATESVPATESAPVAPESSAPGTETAPATESAPATESSPVAPGTETTPATPGAESTPVTPVAPESSAPAVESSPVAPGVETTPVAPVAPSTTAKTSALVSTTEGTIPTTLESVPAIQPSANSSYTIASVSSFEGAGNNMRLTYGAAIIGLAAFLI.

Residues 1–20 (MRFATAQLAALAYYILSTEA) form the signal peptide. Residues 55–278 (GSKNKREAEI…DCQCDTPSPS (224 aa)) enclose the Flo11 domain. Disordered regions lie at residues 278–410 (STTT…LTTT), 453–510 (LTET…TVTE), and 555–666 (TPAT…ALVS). Low complexity predominate over residues 454-499 (TETTPVPSSVDSTSVTSAPETTPESTAPESSAPESSAPESSAPVTE). Polar residues predominate over residues 500–510 (TPTGPVSTVTE). 2 stretches are compositionally biased toward low complexity: residues 555 to 575 (TPAT…VPAT) and 584 to 663 (SSAP…KTSA). Serine 696 carries GPI-anchor amidated serine lipidation. Positions 697 to 721 (SFEGAGNNMRLTYGAAIIGLAAFLI) are cleaved as a propeptide — removed in mature form.

This sequence belongs to the HWP1 family. In terms of processing, the GPI-anchor is attached to the protein in the endoplasmic reticulum and serves to target the protein to the cell surface. There, the glucosamine-inositol phospholipid moiety is cleaved off and the GPI-modified mannoprotein is covalently attached via its lipidless GPI glycan remnant to the 1,6-beta-glucan of the outer cell wall layer.

It localises to the secreted. It is found in the cell wall. Its subcellular location is the membrane. Its function is as follows. GPI-anchored cell wall protein required for mating efficiency, biofilm formation, and virulence. Involved in normal disseminated infection, but not in intestinal colonization. This Candida albicans (strain SC5314 / ATCC MYA-2876) (Yeast) protein is Cell wall protein RBT1 (RBT1).